A 364-amino-acid polypeptide reads, in one-letter code: Caffeic acid 3-O-methyltransferase (364 aa).

131 to 137 provides a ligand contact to substrate; that stretch reads MNQDKVL. The substrate binding stretch occupies residues 163–181; the sequence is AFEYHGTDSRFNRVFNEGM. Positions 209, 232, 252, 253, and 266 each coordinate S-adenosyl-L-methionine. The Proton acceptor role is filled by His270.

It belongs to the class I-like SAM-binding methyltransferase superfamily. Cation-independent O-methyltransferase family. COMT subfamily. In terms of assembly, homodimer. Confined to the vascular tissues of organs undergoing lignification such as stems and roots.

The enzyme catalyses (E)-caffeate + S-adenosyl-L-methionine = (E)-ferulate + S-adenosyl-L-homocysteine + H(+). It catalyses the reaction tricetin + 2 S-adenosyl-L-methionine = 3',5'-di-O-methyltricetin + 2 S-adenosyl-L-homocysteine + 2 H(+). The catalysed reaction is luteolin + S-adenosyl-L-methionine = chrysoeriol + S-adenosyl-L-homocysteine + H(+). It carries out the reaction tricetin + S-adenosyl-L-methionine = 3'-O-methyltricetin + S-adenosyl-L-homocysteine + H(+). It functions in the pathway aromatic compound metabolism; phenylpropanoid biosynthesis. Its function is as follows. Catalyzes the conversion of caffeic acid to ferulic acid and of 5-hydroxyferulic acid to sinapic acid. The resulting products may subsequently be converted to the corresponding alcohols that are incorporated into lignins. Can use the flavone tricetin (5,7,3',4',5'-pentahydroxyflavone) as the preferred substrate and give rise to its 3',5'-dimethyl derivative, tricin (3',5'-dimethoxy-5,7,4'-trihydroxyflavone), as the major product, and selgin to a lower extent. Tricin exhibits potential benefits for human health including relaxant effect on smooth muscle of intestinal tissues, antioxidant effect, antihistaminic activity, and growth inhibition of human malignant breast tumor cells and colon cancer cells. Can also use luteolin, quercetin and 5-hydroxyferulic acid (5HF) as substrates. This chain is Caffeic acid 3-O-methyltransferase, found in Zea mays (Maize).